Reading from the N-terminus, the 782-residue chain is Endonuclease MutS2 (782 aa).

336–343 is an ATP binding site; it reads GPNTGGKT. Residues 707–782 enclose the Smr domain; sequence LDLRGYRYED…GFGVTVATLK (76 aa).

It belongs to the DNA mismatch repair MutS family. MutS2 subfamily. Homodimer. Binds to stalled ribosomes, contacting rRNA.

Its function is as follows. Endonuclease that is involved in the suppression of homologous recombination and thus may have a key role in the control of bacterial genetic diversity. Functionally, acts as a ribosome collision sensor, splitting the ribosome into its 2 subunits. Detects stalled/collided 70S ribosomes which it binds and splits by an ATP-hydrolysis driven conformational change. Acts upstream of the ribosome quality control system (RQC), a ribosome-associated complex that mediates the extraction of incompletely synthesized nascent chains from stalled ribosomes and their subsequent degradation. Probably generates substrates for RQC. This chain is Endonuclease MutS2, found in Staphylococcus aureus (strain JH1).